The sequence spans 493 residues: N-acetylglucosamine kinase 1 (493 aa).

The Hexokinase domain maps to 27 to 490 (ESSVLSSIVE…SIIGAAIGAA (464 aa)). The hexokinase small subdomain stretch occupies residues 79-221 (TGDEHGQYLV…GLTLDVQSIL (143 aa)). Residues 222–479 (NDSLAVYSAG…IKVDLKLIEN (258 aa)) form a hexokinase large subdomain region.

This sequence belongs to the hexokinase family. As to quaternary structure, interacts with histone deacetylase SIR2 under filamentation-inducing conditions.

Its subcellular location is the cytoplasm. It is found in the nucleus. The protein localises to the mitochondrion. It catalyses the reaction N-acetyl-D-glucosamine + ATP = N-acetyl-D-glucosamine 6-phosphate + ADP + H(+). The catalysed reaction is D-mannose + ATP = D-mannose 6-phosphate + ADP + H(+). It carries out the reaction D-glucose + ATP = D-glucose 6-phosphate + ADP + H(+). The enzyme catalyses D-glucosamine + ATP = D-glucosamine 6-phosphate + ADP + H(+). The protein operates within carbohydrate metabolism; hexose metabolism. It participates in carbohydrate degradation; glycolysis; D-glyceraldehyde 3-phosphate and glycerone phosphate from D-glucose: step 1/4. Its function is as follows. Component of the N-acetylglucosamine catabolic cascade that phosphorylates N-acetylglucosamine (GlcNAc), and allows the unique ability to utilise GlcNAc as carbon source. Converts GlcNAc to GlcNAc-6-P. Also able to phosphorylate glucose, glucosamine (GlcN), and mannose. Galactose, fructose, N-acetylmannosamine (ManNAc), mannosamine (ManN), galactosamine (GalN), and N-acetylgalactosamine (GalNAc) are not phosphorylated by HXK1. GlcNAc metabolism is closely associated with virulence and morphogenesis, and is involved in the cell wall synthesis. Acts both as a repressor and an activator of genes involved in maintaining cellular homeostasis. Contributes to white-opaque morphological transition and plays a role as a filamentation repressor. In Candida albicans (strain SC5314 / ATCC MYA-2876) (Yeast), this protein is N-acetylglucosamine kinase 1.